Reading from the N-terminus, the 121-residue chain is MNLIQQLEQEEIARLNKDIPEFAPGDTVVVSVRVVEGTRSRLQAYEGVVIARRNRGLNSNFIVRKISSGEGVERTFQLYSPTVEKIEVKRRGDVRRAKLYYLRGLTGKAARIKEKLPARKG.

It belongs to the bacterial ribosomal protein bL19 family.

Functionally, this protein is located at the 30S-50S ribosomal subunit interface and may play a role in the structure and function of the aminoacyl-tRNA binding site. This chain is Large ribosomal subunit protein bL19, found in Neisseria meningitidis serogroup C (strain 053442).